A 67-amino-acid polypeptide reads, in one-letter code: Large ribosomal subunit protein bL35 (67 aa).

Belongs to the bacterial ribosomal protein bL35 family.

In Sinorhizobium fredii (strain NBRC 101917 / NGR234), this protein is Large ribosomal subunit protein bL35.